The following is a 154-amino-acid chain: Aminoalkylphosphonate N-acetyltransferase (154 aa).

The region spanning 14-154 is the N-acetyltransferase domain; the sequence is CELRHATTED…QSHFRFTKAL (141 aa).

As to quaternary structure, homodimer. The cofactor is a divalent metal cation.

It catalyses the reaction aminomethylphosphonate + acetyl-CoA = 2-N-acetamidomethylphosphonate + CoA. The catalysed reaction is (S)-1-aminoethylphosphonate + acetyl-CoA = [(1S)-1-acetamidoethyl]phosphonate + CoA. In terms of biological role, aminoalkylphosphonate N-acetyltransferase which is able to acetylate a range of aminoalkylphosphonic acids, including (S)-1-aminoethylphosphonate ((S)-1AEP) and 2-aminoethylphosphonate, using acetyl-CoA as acetyl donor. Its physiological role in S.typhimurium is unclear. However, by acetylating (S)-1AEP, PhnO would protect against the deleterious effects of (S)-1AEP, a structural analog of D-alanine that has antibacterial properties. This is Aminoalkylphosphonate N-acetyltransferase from Salmonella typhimurium (strain LT2 / SGSC1412 / ATCC 700720).